A 373-amino-acid chain; its full sequence is 3 beta-hydroxysteroid dehydrogenase/Delta 5--&gt;4-isomerase type 4 (373 aa).

The active-site Proton acceptor is the Y155. NAD(+) is bound at residue K159. A helical transmembrane segment spans residues 288–308 (LPLLYWLAFLLEIVSFFLHPV). An N6-acetyllysine modification is found at K350.

It belongs to the 3-beta-HSD family. Skin, placenta, also detectable in ovary and adrenal gland.

The protein resides in the endoplasmic reticulum membrane. The protein localises to the mitochondrion membrane. It carries out the reaction a 3beta-hydroxy-Delta(5)-steroid + NAD(+) = a 3-oxo-Delta(5)-steroid + NADH + H(+). The enzyme catalyses a 3-oxo-Delta(5)-steroid = a 3-oxo-Delta(4)-steroid. It participates in lipid metabolism; steroid biosynthesis. In terms of biological role, 3-beta-HSD is a bifunctional enzyme, that catalyzes the oxidative conversion of Delta(5)-ene-3-beta-hydroxy steroid, and the oxidative conversion of ketosteroids. The 3-beta-HSD enzymatic system plays a crucial role in the biosynthesis of all classes of hormonal steroids. The protein is 3 beta-hydroxysteroid dehydrogenase/Delta 5--&gt;4-isomerase type 4 (Hsd3b6) of Rattus norvegicus (Rat).